We begin with the raw amino-acid sequence, 1860 residues long: MEDRRPQKSCDEAIGSLVRQEYEAAVAHSTEALLAMGPRTPTPSTALLRTRALLYRIAARLQLKDYDQADEDCKHVFAEELAKGDGSFRAGLQSLLLDGSLQEVCSVLSKALYGEPLNGIMTKDMTRLKRLLSEIEAARSKVVFSEENEEDVQEGWQFRPPPRGVTSSEEYTLCKRFLEQGLCRYGAQCTSAHSQEELTEWQRRYASRLIRLKQQQEGKHFSENYMEALIEKWINSLTPERVMNDCVDGVTVEHSSDLSITVNTKKSSHSWTFTLFCKPVRTLQRIALLYDANRPHFSIAAVSAGDASALEPQPVCPGGCQEWSAASPVQNGMDHCIYTVEIAFSTEIFGTFRQTVVFDLGCEPVLMQRVMVDAASIEDLEHLLQARQQLLMTAKRWDSSCKTIVEFVPNENMDLERSLLTRYQIPLSADQLFTQSVLDKTLTRDNYQPRLHDLLYIEEIAQYKEVTKFNIKVNLQLVTSFMLTGISGGAKYAQNGQLFARFKLTETLSEDTLAGRLVMTKVNSVLLLPVFKERMGQNQPAGAKERVYEALIEEKTKDYIFLRVCKECCDELGLVADQELQVELQFQLNRLPLCEMHYALDRVRDNSILFPDISLTPTIPWSPNRQWDEQLDPRLNAKQKEAILAITTPLSINLPPVLIIGPYGTGKTFTLAQAVKHILKQPESRVLICTHSNSAADLYIKDYLHPYVEAGNPHARPLRVYFRNRWVKTVHPLVQQYCLISGAHFTFQMPTRQDVERHRVVVVTLSTSQYLCQLDLEPGIFTHILLDEAAQAMECETIMPLALAVKSTRVVLAGDHMQLSPFVYSEFARERNLHVSLLDRLYEHYPSEYPCRILLCENYRSHEAIINYTSDLFYEGKLMASGKQPPHKDFYPLTFFTARGEDVQEKNSTAYYNNAEVFEIVERVEEMRKKWPVSWGKLEEGSIGVVSPYADQVFRIRAELRKKRMSEVSVERVLNVQGKQFRVLFLSTVRTRHTCKHKQTAIKRKEQLVEDSTEDLDYGFLSNYKLLNTAITRAQSLVAVVGDPIALCSVGRCRKFWETFISICHENHSLHGITFEQIKIQLEALELKKTYVLNPLAPEFIPRALRSQHPPQQGPGKHQHSPPKAKGQLANHTEPFPPEGFVQPNAAVLMGNPIQAFTPPGAGAPASGKSPSPVQRLDPGASILYVPAVYGGNMVMPMPLPLPWAGYQSRFPMDPRIMSHQAAMYNLNLRPAASRTSPVLYGFSHASPLGLNQQQNTEKELLQEPSGNGKMDINGKAEHCRLLTPERKAPELKEKQGDLESVQNKSPEPQSNMGFPANRLIRKDPQRALNFHMAPPHPAFPSHHGTSQFPQQYGLSRPPLRMQTPMHPQASSFPPSFYSGPPMGPRGLQSPVLEGGEDPMGAGMSEDLKGVVRGLPAQMHQQPLRLNSFGEESLDSLLGDTLDGQASSGMDALQHQQQARVGQWGEHTPFLPAGVAPFPLPQQLAHLAQPGLRIPPQILRAGWGLGPAADEEPRPTMPRYPGLLREMLPQDQQYEQRDPAEMPPPQSRLLQYRQQIQPRSPGDLPSPSSSAPNHNFPAPAQPSYPDTSREPPVGFSQAPFPPDHSAGPLPVKYLLQEAHWPHPGHMLGHGLPFGLQAMAQRQDPGPLQHQQQKQQLQAPQSSLHSLDEYEPRGPGRPLYQRRISSSSPQPYPDSLEPQDQPVPSYRYPSADLWLGGPGPVPGPAPIHNIPCNGASHIGPHREILVSKAMSEEQMKAECLQPPPPPPPHPASAASLQHHGQFPPLLPSKQTPPDPGGGGNTSPAGHPKPPTMSYASALRAPPKPRPMLPEQSKKNSDPISLLQELSIGSSNSSNGYYTYFK.

The C3H1-type zinc-finger motif lies at Ser168 to Glu196. Gly661 to Thr668 is an ATP binding site. Positions Asp787–Ala790 match the DEAA box motif. 6 disordered regions span residues Arg1106–Phe1136, Thr1158–Leu1177, Glu1286–Ala1317, Ile1556–His1604, Arg1641–Ser1709, and Met1749–Lys1860. Residues Ser1107–Gly1116 are compositionally biased toward low complexity. Basic and acidic residues predominate over residues Glu1286–Asp1298. Residues Ser1301 to Met1313 are compositionally biased toward polar residues. Residues Arg1641–Gln1660 are compositionally biased toward low complexity. Pro residues-rich tracts occupy residues Gln1760–Pro1769 and Pro1783–Pro1794. The segment covering Gly1847–Lys1860 has biased composition (low complexity).

Belongs to the DNA2/NAM7 helicase family.

The protein resides in the nucleus. Functionally, may act as a helicase. The protein is Probable helicase with zinc finger domain (helz) of Danio rerio (Zebrafish).